Consider the following 400-residue polypeptide: Protein transport protein HofC homolog (400 aa).

Helical transmembrane passes span 165–185, 209–229, and 370–390; these read YPIIILAMAIMVVVAMLHFVL, LADFSGEWSWLLVLFGFLLAI, and LLIITGGIIGTLVVAMYLPIF.

It belongs to the GSP F family.

It localises to the cell inner membrane. This Escherichia coli (strain K12) protein is Protein transport protein HofC homolog (hofC).